We begin with the raw amino-acid sequence, 736 residues long: Zinc finger CCCH domain-containing protein 14 (736 aa).

The residue at position 1 (Met1) is an N-acetylmethionine. Polar residues-rich tracts occupy residues Thr77–Ser103 and Val131–Gln145. The segment at Thr77–Gln145 is disordered. Phosphoserine is present on Ser85. Residues Lys99, Lys139, Lys175, and Lys198 each participate in a glycyl lysine isopeptide (Lys-Gly) (interchain with G-Cter in SUMO2) cross-link. Phosphoserine is present on Ser240. Lys245 is covalently cross-linked (Glycyl lysine isopeptide (Lys-Gly) (interchain with G-Cter in SUMO2)). Phosphoserine is present on Ser281. Residues Lys283 and Lys295 each participate in a glycyl lysine isopeptide (Lys-Gly) (interchain with G-Cter in SUMO2) cross-link. A disordered region spans residues His310–Ala350. A phosphoserine mark is found at Ser327 and Ser343. An N6-acetyllysine; alternate modification is found at Lys357. Lys357 is covalently cross-linked (Glycyl lysine isopeptide (Lys-Gly) (interchain with G-Cter in SUMO2); alternate). Lys378 participates in a covalent cross-link: Glycyl lysine isopeptide (Lys-Gly) (interchain with G-Cter in SUMO2). Phosphoserine occurs at positions 390 and 409. Positions Val398–Gln430 are disordered. The span at Ile412–Glu423 shows a compositional bias: basic and acidic residues. Residue Lys413 forms a Glycyl lysine isopeptide (Lys-Gly) (interchain with G-Cter in SUMO2) linkage. Ser421 carries the post-translational modification Phosphoserine. Residue Lys489 forms a Glycyl lysine isopeptide (Lys-Gly) (interchain with G-Cter in SUMO2) linkage. A phosphoserine mark is found at Ser498, Ser515, Ser527, and Ser620. 5 C3H1-type zinc fingers span residues Glu595–Ser620, Pro621–Asn640, Cys641–His656, Cys682–Lys699, and Cys701–Ile719.

The protein belongs to the ZC3H14 family. As to quaternary structure, homodimer; facilitating circular RNAs (circRNAs) formation. Associates with the spliceosome. Interacts with HOOK2. Interacts with ZFC3H1 in a RNase-sensitive manner. In terms of tissue distribution, expressed in fetal and adult brain. Expressed in fetal and adult temporal lobe.

The protein resides in the nucleus speckle. The protein localises to the cytoplasm. RNA-binding protein involved in the biogenesis of circular RNAs (circRNAs), which are produced by back-splicing circularization of pre-mRNAs. Acts by binding to both exon-intron boundary and 3'-UTR of pre-mRNAs to promote circRNA biogenesis through dimerization and the association with the spliceosome. Required for spermatogenesis via involvement in circRNA biogenesis. Regulates the pre-mRNA processing of ATP5MC1; preventing its degradation. Also binds the poly(A) tail of mRNAs; controlling poly(A) length in neuronal cells. In Homo sapiens (Human), this protein is Zinc finger CCCH domain-containing protein 14.